The sequence spans 521 residues: RING-type E3 ubiquitin-protein ligase PPIL2 (521 aa).

In terms of domain architecture, U-box spans 35-108; sequence RRLPFDHCSL…GQYHCPVLYS (74 aa). Residues 197–217 are a coiled coil; sequence LKNTNSETRETLQELYKEFKG. Lys216 participates in a covalent cross-link: Glycyl lysine isopeptide (Lys-Gly) (interchain with G-Cter in SUMO2). The PPIase cyclophilin-type domain maps to 278–433; it reads KKGYVRLHTN…EEVLICTTTV (156 aa). The span at 447-462 shows a compositional bias: basic and acidic residues; the sequence is QERKKTQHQVDPEAKV. The tract at residues 447–521 is disordered; sequence QERKKTQHQV…SRGFGDFSSW (75 aa). Residues 465-478 show a composition bias toward polar residues; that stretch reads SQPQPGNQGPQTYR. Position 483 is an N6-acetyllysine (Lys483).

Belongs to the cyclophilin-type PPIase family. PPIL2 subfamily. As to quaternary structure, component of the minor spliceosome, which splices U12-type introns. Within this complex, interacts with PRPF8/PRP8, EFTUD2/SNU114 and PLRG1. Interacts with isoform 2 of BSG. Interacts (via the PPIase cyclophilin-type domain) with CRNKL1; they may form a trimeric complex with HSP90.

Its subcellular location is the nucleus. It carries out the reaction S-ubiquitinyl-[E2 ubiquitin-conjugating enzyme]-L-cysteine + [acceptor protein]-L-lysine = [E2 ubiquitin-conjugating enzyme]-L-cysteine + N(6)-ubiquitinyl-[acceptor protein]-L-lysine.. The protein operates within protein modification; protein ubiquitination. Functionally, has a ubiquitin-protein ligase activity acting as an E3 ubiquitin protein ligase or as an ubiquitin-ubiquitin ligase promoting elongation of ubiquitin chains on substrates. By mediating 'Lys-48'-linked polyubiquitination of proteins could target them for proteasomal degradation. May also function as a chaperone, playing a role in transport to the cell membrane of BSG/Basigin for instance. Probable inactive PPIase with no peptidyl-prolyl cis-trans isomerase activity. As a component of the minor spliceosome, involved in the splicing of U12-type introns in pre-mRNAs. The protein is RING-type E3 ubiquitin-protein ligase PPIL2 of Mus musculus (Mouse).